The following is a 165-amino-acid chain: MKAQGFVHKYGDNVDTDVIIPARYLNTADHKELANHCMEDIDKDFVAKVKEGDIMVGGWNFGCGSSREHAPIAIKASGISCIIAKSFARIFYRNAINIGLAIIESEEVAQSLENGDEVAIDFDKGIITNCKNNQQFSTTPFPPFIQEIINANGYLNWISKQKANA.

This sequence belongs to the LeuD family. LeuD type 2 subfamily. As to quaternary structure, heterodimer of LeuC and LeuD.

It carries out the reaction (2R,3S)-3-isopropylmalate = (2S)-2-isopropylmalate. Its pathway is amino-acid biosynthesis; L-leucine biosynthesis; L-leucine from 3-methyl-2-oxobutanoate: step 2/4. In terms of biological role, catalyzes the isomerization between 2-isopropylmalate and 3-isopropylmalate, via the formation of 2-isopropylmaleate. This chain is 3-isopropylmalate dehydratase small subunit, found in Helicobacter hepaticus (strain ATCC 51449 / 3B1).